A 136-amino-acid chain; its full sequence is Putative covalently bound cell wall protein 22 (136 aa).

Positions 1–18 are cleaved as a signal peptide; it reads MQFSTVASIAAIAAVASA. Residues asparagine 21 and asparagine 82 are each glycosylated (N-linked (GlcNAc...) asparagine). Positions 73–110 are disordered; sequence PLPTTEAPKNTTSPAPTEKPTEKPTEKPTQQGSSTQTV. Low complexity predominate over residues 99-110; it reads KPTQQGSSTQTV. Glycine 115 carries the GPI-anchor amidated glycine lipid modification. Residues 116-136 constitute a propeptide, removed in mature form; the sequence is AAVKALPAAGALLAGAAALLL.

This sequence belongs to the PGA59 family. Post-translationally, the GPI-anchor is attached to the protein in the endoplasmic reticulum and serves to target the protein to the cell surface. There, the glucosamine-inositol phospholipid moiety is cleaved off and the GPI-modified mannoprotein is covalently attached via its lipidless GPI glycan remnant to the 1,6-beta-glucan of the outer cell wall layer.

It is found in the secreted. The protein resides in the cell wall. The protein localises to the membrane. Its function is as follows. Cell wall protein necessary for cell wall integrity. The protein is Putative covalently bound cell wall protein 22 (CCW22) of Saccharomyces cerevisiae (strain ATCC 204508 / S288c) (Baker's yeast).